The sequence spans 215 residues: Cytochrome b6 (215 aa).

The chain crosses the membrane as a helical span at residues 32-52 (IFYCLGGITFTCFLVQVATGF). Cys35 is a heme c binding site. Residues His86 and His100 each coordinate heme b. 3 helical membrane-spanning segments follow: residues 90–110 (ASMMVLMMILHVFRVWLTGGF), 116–136 (LTWTTGVIMAVCTVSFGVTGY), and 186–206 (LHTFVLPLLTAVFMLMHFLMI). Residues His187 and His202 each coordinate heme b.

Belongs to the cytochrome b family. PetB subfamily. In terms of assembly, the 4 large subunits of the cytochrome b6-f complex are cytochrome b6, subunit IV (17 kDa polypeptide, PetD), cytochrome f and the Rieske protein, while the 4 small subunits are PetG, PetL, PetM and PetN. The complex functions as a dimer. The cofactor is heme b. Heme c serves as cofactor.

Its subcellular location is the plastid. It localises to the chloroplast thylakoid membrane. Its function is as follows. Component of the cytochrome b6-f complex, which mediates electron transfer between photosystem II (PSII) and photosystem I (PSI), cyclic electron flow around PSI, and state transitions. The protein is Cytochrome b6 of Stigeoclonium helveticum (Green alga).